Reading from the N-terminus, the 304-residue chain is Ornithine carbamoyltransferase (304 aa).

Carbamoyl phosphate is bound by residues S47–T50, R98, and H125–Q128. L-ornithine contacts are provided by residues N156, D221, and S225–M226. Residues C262 to L263 and R290 contribute to the carbamoyl phosphate site.

It belongs to the aspartate/ornithine carbamoyltransferase superfamily. OTCase family.

Its subcellular location is the cytoplasm. It catalyses the reaction carbamoyl phosphate + L-ornithine = L-citrulline + phosphate + H(+). It participates in amino-acid biosynthesis; L-arginine biosynthesis; L-arginine from L-ornithine and carbamoyl phosphate: step 1/3. Reversibly catalyzes the transfer of the carbamoyl group from carbamoyl phosphate (CP) to the N(epsilon) atom of ornithine (ORN) to produce L-citrulline. The protein is Ornithine carbamoyltransferase of Methanococcus maripaludis (strain C7 / ATCC BAA-1331).